A 181-amino-acid polypeptide reads, in one-letter code: TATA-box-binding protein (181 aa).

2 repeat units span residues 7 to 83 (VVNV…VKEL) and 98 to 173 (VQNM…SKTL).

Belongs to the TBP family.

In terms of biological role, general factor that plays a role in the activation of archaeal genes transcribed by RNA polymerase. Binds specifically to the TATA box promoter element which lies close to the position of transcription initiation. This chain is TATA-box-binding protein, found in Methanococcus maripaludis (strain DSM 14266 / JCM 13030 / NBRC 101832 / S2 / LL).